The sequence spans 272 residues: Phosphatidylglycerol--prolipoprotein diacylglyceryl transferase (272 aa).

A run of 4 helical transmembrane segments spans residues 15-35 (LGPL…LVLF), 53-73 (AFAV…WHVV), 90-110 (IWEG…CFFV), and 117-137 (VPPF…LCFA). Residue Arg138 participates in a 1,2-diacyl-sn-glycero-3-phospho-(1'-sn-glycerol) binding. 3 helical membrane passes run 174 to 194 (FHPI…ILLV), 199 to 219 (VFVK…VLYG), and 237 to 257 (FGLD…VLIA).

The protein belongs to the Lgt family.

The protein localises to the cell membrane. The enzyme catalyses L-cysteinyl-[prolipoprotein] + a 1,2-diacyl-sn-glycero-3-phospho-(1'-sn-glycerol) = an S-1,2-diacyl-sn-glyceryl-L-cysteinyl-[prolipoprotein] + sn-glycerol 1-phosphate + H(+). The protein operates within protein modification; lipoprotein biosynthesis (diacylglyceryl transfer). Catalyzes the transfer of the diacylglyceryl group from phosphatidylglycerol to the sulfhydryl group of the N-terminal cysteine of a prolipoprotein, the first step in the formation of mature lipoproteins. This Tropheryma whipplei (strain Twist) (Whipple's bacillus) protein is Phosphatidylglycerol--prolipoprotein diacylglyceryl transferase.